The following is a 180-amino-acid chain: Translation initiation factor IF-3 (180 aa).

It belongs to the IF-3 family. As to quaternary structure, monomer.

Its subcellular location is the cytoplasm. IF-3 binds to the 30S ribosomal subunit and shifts the equilibrium between 70S ribosomes and their 50S and 30S subunits in favor of the free subunits, thus enhancing the availability of 30S subunits on which protein synthesis initiation begins. This Klebsiella pneumoniae protein is Translation initiation factor IF-3.